The chain runs to 455 residues: Kynurenine 3-monooxygenase (455 aa).

This sequence belongs to the aromatic-ring hydroxylase family. KMO subfamily. FAD serves as cofactor.

The catalysed reaction is L-kynurenine + NADPH + O2 + H(+) = 3-hydroxy-L-kynurenine + NADP(+) + H2O. It participates in cofactor biosynthesis; NAD(+) biosynthesis; quinolinate from L-kynurenine: step 1/3. In terms of biological role, catalyzes the hydroxylation of L-kynurenine (L-Kyn) to form 3-hydroxy-L-kynurenine (L-3OHKyn). Required for synthesis of quinolinic acid. In Xanthomonas oryzae pv. oryzae (strain PXO99A), this protein is Kynurenine 3-monooxygenase.